The primary structure comprises 207 residues: Guanylate kinase (207 aa).

One can recognise a Guanylate kinase-like domain in the interval 7–185; it reads GIVLVLCAPS…AYDELRAAYI (179 aa). ATP is bound at residue 14–21; that stretch reads APSGTGKT.

Belongs to the guanylate kinase family.

It localises to the cytoplasm. It carries out the reaction GMP + ATP = GDP + ADP. In terms of biological role, essential for recycling GMP and indirectly, cGMP. The sequence is that of Guanylate kinase from Nitratidesulfovibrio vulgaris (strain ATCC 29579 / DSM 644 / CCUG 34227 / NCIMB 8303 / VKM B-1760 / Hildenborough) (Desulfovibrio vulgaris).